The following is a 77-amino-acid chain: Sec-independent protein translocase protein TatA 2 (77 aa).

The helical transmembrane segment at 2–22 (FPGGISMTELIIILAVILLLF) threads the bilayer. Residues 52-77 (KEVKAEDVKTEERKEEKKEEKEKVEA) are disordered.

Belongs to the TatA/E family. As to quaternary structure, forms a complex with TatC.

Its subcellular location is the cell inner membrane. In terms of biological role, part of the twin-arginine translocation (Tat) system that transports large folded proteins containing a characteristic twin-arginine motif in their signal peptide across membranes. TatA could form the protein-conducting channel of the Tat system. The chain is Sec-independent protein translocase protein TatA 2 from Aquifex aeolicus (strain VF5).